Consider the following 257-residue polypeptide: Probable enoyl-CoA hydratase echA8 (257 aa).

The protein belongs to the enoyl-CoA hydratase/isomerase family.

The catalysed reaction is a (3S)-3-hydroxyacyl-CoA = a (2E)-enoyl-CoA + H2O. It catalyses the reaction a 4-saturated-(3S)-3-hydroxyacyl-CoA = a (3E)-enoyl-CoA + H2O. Could possibly oxidize fatty acids using specific components. The protein is Probable enoyl-CoA hydratase echA8 (echA8) of Mycobacterium leprae (strain TN).